We begin with the raw amino-acid sequence, 622 residues long: E3 ubiquitin-protein ligase hrd-1 (622 aa).

The first 23 residues, 1–23 (MRVSAGLMIGGSCVATAATVLNA), serve as a signal peptide directing secretion. Residues 24 to 41 (FVINKQFYPSIVYLSKSN) lie on the Lumenal side of the membrane. A helical transmembrane segment spans residues 42-62 (ASMAVLYFQGIVLVYLMFQLL). The Cytoplasmic portion of the chain corresponds to 63–99 (KSILFGDLRAAEAEHLSERTWHAVLETCLAFTVFRDD). A helical membrane pass occupies residues 100 to 120 (FSAMFVMQFIGLLFIKCFHWL). At 121–141 (ADDRVDMMERSPVITLRFHLR) the chain is on the lumenal side. A helical membrane pass occupies residues 142 to 162 (MMTVLAALGFADSYFVSSAYF). The Cytoplasmic portion of the chain corresponds to 163–170 (STITKGAS). A helical membrane pass occupies residues 171 to 191 (SQIVFGFEYAILLALVLHVTI). Over 192–215 (KYLLHMHDLRNPQSWDNKAVYLLY) the chain is Lumenal. A helical transmembrane segment spans residues 216 to 236 (AELLINLIRCVLYGFFAVIML). Topologically, residues 237-622 (RVHTFPLFSV…RFPPPNPEHE (386 aa)) are cytoplasmic. Residues 292 to 333 (CIICREEMTVESSPKRLPCSHVFHAHCLRSWFQRQQTCPTCR) form an RING-type; atypical zinc finger. Positions 436–445 (MPPPPIPQPN) are enriched in pro residues. Disordered regions lie at residues 436-463 (MPPPPIPQPNAAPGESSNAEPPGRPNFD) and 514-622 (PVPT…PEHE). Low complexity predominate over residues 526–538 (ATASSVPTSVPSE). Residues 562-577 (FNDTQSTSTPSTSAGP) are compositionally biased toward polar residues. The segment covering 579 to 596 (PSLTPSTSSVPSTSSVRT) has biased composition (low complexity).

This sequence belongs to the HRD1 family. In terms of assembly, homodimer.

The protein resides in the endoplasmic reticulum membrane. The enzyme catalyses S-ubiquitinyl-[E2 ubiquitin-conjugating enzyme]-L-cysteine + [acceptor protein]-L-lysine = [E2 ubiquitin-conjugating enzyme]-L-cysteine + N(6)-ubiquitinyl-[acceptor protein]-L-lysine.. It functions in the pathway protein modification; protein ubiquitination. Acts as an E3 ubiquitin-protein ligase which accepts ubiquitin specifically from endoplasmic reticulum-associated ubc-7 E2 ligase and transfers it to substrates, promoting their degradation. Component of the endoplasmic reticulum quality control (ERQC) system, which is also called the ER-associated degradation (ERAD) system, involved in ubiquitin-dependent degradation of misfolded endoplasmic reticulum proteins. Also promotes the degradation of normal but naturally short-lived proteins. Protects cells from ER stress-induced apoptosis. Thought to play a role together with hsp-3 in developmental growth and function of intestinal cells and to play a role together with hsp-4 in gonad formation. The polypeptide is E3 ubiquitin-protein ligase hrd-1 (Caenorhabditis briggsae).